Consider the following 185-residue polypeptide: Signal peptidase I (185 aa).

The Cytoplasmic portion of the chain corresponds to 1 to 20; it reads MKSEKEKTSKKSAVLDWAKA. Residues 21–41 form a helical membrane-spanning segment; sequence IIIAVVLAVLIRNFLFAPYVV. Residues 42–185 are Extracellular-facing; it reads DGESMEPTLH…FPFNEIRKTK (144 aa). Catalysis depends on residues Ser45 and Lys85.

The protein belongs to the peptidase S26 family.

The protein localises to the cell membrane. The enzyme catalyses Cleavage of hydrophobic, N-terminal signal or leader sequences from secreted and periplasmic proteins.. The sequence is that of Signal peptidase I (sipA) from Bacillus amyloliquefaciens (Bacillus velezensis).